The primary structure comprises 260 residues: MELQLTGKESGWWIVSHENKLWLPKGELPQGNAANWSLQGATARQIGEWQGQPVWLIRQMMPSGMGSVRQLLDVDRGLFQLAGRGVQLAEFYRSHRFCGYCGHEMHASRTEWASLCNHCRERYYPQIAPCVIVAIRRGDEILLAQHVRHRGGINTVLAGFVEVGETLEQAVSREVLEESNIHIKNLRYVTSQPWPFPHSLMMAFMADYDSGELCHDPKELLNAGWYRYDQLPLLPPPGTVARRLIEDTVVLCREHSDLSQ.

2 residues coordinate substrate: K25 and R69. Residues C98 and C101 each coordinate Zn(2+). E111 serves as a coordination point for substrate. Zn(2+)-binding residues include C116 and C119. Y124 is a binding site for substrate. Positions 125 to 248 constitute a Nudix hydrolase domain; the sequence is PQIAPCVIVA…TVARRLIEDT (124 aa). Positions 158, 174, and 178 each coordinate a divalent metal cation. The Nudix box motif lies at 159-180; it reads GFVEVGETLEQAVSREVLEESN. 192–199 is a substrate binding site; it reads QPWPFPHS. E219 lines the a divalent metal cation pocket. A241 contributes to the substrate binding site.

The protein belongs to the Nudix hydrolase family. NudC subfamily. As to quaternary structure, homodimer. Mg(2+) serves as cofactor. Mn(2+) is required as a cofactor. It depends on Zn(2+) as a cofactor.

The enzyme catalyses a 5'-end NAD(+)-phospho-ribonucleoside in mRNA + H2O = a 5'-end phospho-adenosine-phospho-ribonucleoside in mRNA + beta-nicotinamide D-ribonucleotide + 2 H(+). It catalyses the reaction NAD(+) + H2O = beta-nicotinamide D-ribonucleotide + AMP + 2 H(+). It carries out the reaction NADH + H2O = reduced beta-nicotinamide D-ribonucleotide + AMP + 2 H(+). In terms of biological role, mRNA decapping enzyme that specifically removes the nicotinamide adenine dinucleotide (NAD) cap from a subset of mRNAs by hydrolyzing the diphosphate linkage to produce nicotinamide mononucleotide (NMN) and 5' monophosphate mRNA. The NAD-cap is present at the 5'-end of some mRNAs and stabilizes RNA against 5'-processing. Has preference for mRNAs with a 5'-end purine. Catalyzes the hydrolysis of a broad range of dinucleotide pyrophosphates. This is NAD-capped RNA hydrolase NudC from Yersinia pseudotuberculosis serotype O:1b (strain IP 31758).